The sequence spans 396 residues: Tyrosine--tRNA ligase (396 aa).

The 'HIGH' region motif lies at 39 to 48; sequence PTAPDLHLGH. Positions 223–227 match the 'KMSKS' region motif; sequence KMSKS. ATP is bound at residue Lys226. An S4 RNA-binding domain is found at 334-395; it reads LPVPQLLKQA…GKRKFARVTV (62 aa).

Belongs to the class-I aminoacyl-tRNA synthetase family. TyrS type 2 subfamily. Homodimer.

Its subcellular location is the cytoplasm. The enzyme catalyses tRNA(Tyr) + L-tyrosine + ATP = L-tyrosyl-tRNA(Tyr) + AMP + diphosphate + H(+). Catalyzes the attachment of tyrosine to tRNA(Tyr) in a two-step reaction: tyrosine is first activated by ATP to form Tyr-AMP and then transferred to the acceptor end of tRNA(Tyr). In Thiobacillus denitrificans (strain ATCC 25259 / T1), this protein is Tyrosine--tRNA ligase.